The primary structure comprises 375 residues: NADH-ubiquinone oxidoreductase 40 kDa subunit, mitochondrial (375 aa).

The transit peptide at 1 to 26 directs the protein to the mitochondrion; that stretch reads MAPLTAAMRSTPRIIVSNAFGFQRRA.

The protein belongs to the complex I NDUFA9 subunit family. In terms of assembly, complex I is composed of about 40 different subunits. FAD is required as a cofactor.

Its subcellular location is the mitochondrion matrix. In terms of biological role, accessory subunit of the mitochondrial membrane respiratory chain NADH dehydrogenase (Complex I), that is believed not to be involved in catalysis. Complex I functions in the transfer of electrons from NADH to the respiratory chain. The immediate electron acceptor for the enzyme is believed to be ubiquinone. The sequence is that of NADH-ubiquinone oxidoreductase 40 kDa subunit, mitochondrial (nuo40) from Neurospora crassa (strain ATCC 24698 / 74-OR23-1A / CBS 708.71 / DSM 1257 / FGSC 987).